A 476-amino-acid chain; its full sequence is Proline--tRNA ligase (476 aa).

It belongs to the class-II aminoacyl-tRNA synthetase family. ProS type 3 subfamily. As to quaternary structure, homodimer.

The protein localises to the cytoplasm. It carries out the reaction tRNA(Pro) + L-proline + ATP = L-prolyl-tRNA(Pro) + AMP + diphosphate. Its function is as follows. Catalyzes the attachment of proline to tRNA(Pro) in a two-step reaction: proline is first activated by ATP to form Pro-AMP and then transferred to the acceptor end of tRNA(Pro). The sequence is that of Proline--tRNA ligase from Cenarchaeum symbiosum (strain A).